Consider the following 211-residue polypeptide: Phosphoserine phosphatase (211 aa).

Asp-11 acts as the Nucleophile in catalysis. Residues Asp-11 and Asp-13 each contribute to the Mg(2+) site. Asp-13 acts as the Proton donor in catalysis. Residues Glu-20, Arg-56, 99–100 (SG), and Lys-144 contribute to the substrate site. Asp-167 contacts Mg(2+). Asn-170 is a binding site for substrate.

It belongs to the HAD-like hydrolase superfamily. SerB family. Requires Mg(2+) as cofactor.

The catalysed reaction is O-phospho-L-serine + H2O = L-serine + phosphate. It carries out the reaction O-phospho-D-serine + H2O = D-serine + phosphate. It functions in the pathway amino-acid biosynthesis; L-serine biosynthesis; L-serine from 3-phospho-D-glycerate: step 3/3. This is Phosphoserine phosphatase from Methanocaldococcus jannaschii (strain ATCC 43067 / DSM 2661 / JAL-1 / JCM 10045 / NBRC 100440) (Methanococcus jannaschii).